We begin with the raw amino-acid sequence, 491 residues long: UDP-N-acetylmuramate--L-alanine ligase (491 aa).

126–132 (GTHGKTT) is an ATP binding site.

Belongs to the MurCDEF family.

It is found in the cytoplasm. The catalysed reaction is UDP-N-acetyl-alpha-D-muramate + L-alanine + ATP = UDP-N-acetyl-alpha-D-muramoyl-L-alanine + ADP + phosphate + H(+). Its pathway is cell wall biogenesis; peptidoglycan biosynthesis. Functionally, cell wall formation. The sequence is that of UDP-N-acetylmuramate--L-alanine ligase from Yersinia pestis (strain Pestoides F).